The following is a 202-amino-acid chain: Putative 3-methyladenine DNA glycosylase (202 aa).

Belongs to the DNA glycosylase MPG family.

This is Putative 3-methyladenine DNA glycosylase from Staphylococcus aureus (strain MRSA252).